A 351-amino-acid chain; its full sequence is Trace amine-associated receptor 2 (351 aa).

The Extracellular portion of the chain corresponds to M1–S48. N-linked (GlcNAc...) asparagine glycosylation is found at N24 and N30. 2 disulfides stabilise this stretch: C33–C197 and C116–C201. A helical membrane pass occupies residues F49–S69. At Y70–N79 the chain is on the cytoplasmic side. The chain crosses the membrane as a helical span at residues F80–S100. The Extracellular portion of the chain corresponds to M101 to I118. A helical membrane pass occupies residues Y119–I139. Topologically, residues D140 to R162 are cytoplasmic. The chain crosses the membrane as a helical span at residues L163–A183. Topologically, residues Y184 to K207 are extracellular. Residues L208 to I228 traverse the membrane as a helical segment. Residues Y229–T263 are Cytoplasmic-facing. The helical transmembrane segment at L264 to L284 threads the bilayer. Residues D285–A299 lie on the Extracellular side of the membrane. N289 carries N-linked (GlcNAc...) asparagine glycosylation. The helical transmembrane segment at L300–F322 threads the bilayer. The Cytoplasmic portion of the chain corresponds to R323–E351.

This sequence belongs to the G-protein coupled receptor 1 family. In terms of tissue distribution, not expressed in the pons, thalamus, hypothalamus, hippocampus, caudate, putamen, frontal cortex, basal forebrain, midbrain or liver.

It is found in the cell membrane. In terms of biological role, orphan olfactory receptor specific for trace amines. Trace amine compounds are enriched in animal body fluids and act on trace amine-associated receptors (TAARs) to elicit both intraspecific and interspecific innate behaviors. Ligand-binding causes a conformation change that triggers signaling via the G(s)-class of G-proteins which activate adenylate cyclase. This Homo sapiens (Human) protein is Trace amine-associated receptor 2.